A 737-amino-acid polypeptide reads, in one-letter code: Alpha-adducin (737 aa).

N-acetylmethionine is present on M1. A disordered region spans residues 1 to 21 (MNGDSRAAVVTSPPPTTAPHK). Position 12 is a phosphoserine (S12). S59 is modified (phosphoserine; by PKA). S64 is modified (phosphoserine). Position 331 is a phosphothreonine (T331). Phosphoserine is present on residues S334, S353, S355, S358, and S366. At S408 the chain carries Phosphoserine; by PKA. The segment covering 419–430 (YSFTSDGDSGTC) has biased composition (polar residues). 2 disordered regions span residues 419-490 (YSFT…NLFV) and 576-737 (RREV…KSES). S427 is modified (phosphoserine). A Phosphothreonine modification is found at T429. S431 is subject to Phosphoserine. The residue at position 436 (S436) is a Phosphoserine; by PKA. T445 carries the phosphothreonine; by ROCK2 modification. S464 and S465 each carry phosphoserine. T480 is modified (phosphothreonine; by ROCK2). The residue at position 481 (S481) is a Phosphoserine; by PKA. A compositionally biased stretch (basic and acidic residues) spans 576-601 (RREVERKQKGSEENLDEAREQKEKSP). Residues S586, S600, and S613 each carry the phosphoserine modification. The segment covering 602–614 (PDQPAVPYPPPST) has biased composition (pro residues). Phosphothreonine is present on T614. Residues S678, S707, S710, and S714 each carry the phosphoserine modification. Positions 687 to 714 (PVAEEAAPSAAEEGAAADPGSDGSPGKS) are enriched in low complexity. Residues 715–737 (PSKKKKKFRTPSFLKKSKKKSES) show a composition bias toward basic residues. S716 carries the post-translational modification Phosphoserine; by PKC. Residues 717–734 (KKKKKFRTPSFLKKSKKK) are interaction with calmodulin. A Phosphoserine; by PKA and PKC modification is found at S726.

Belongs to the aldolase class II family. Adducin subfamily. As to quaternary structure, heterodimer of an alpha and a beta subunit or an alpha and a gamma subunit.

It is found in the cytoplasm. The protein resides in the cytoskeleton. It localises to the cell membrane. Its function is as follows. Membrane-cytoskeleton-associated protein that promotes the assembly of the spectrin-actin network. Binds to calmodulin. This is Alpha-adducin (ADD1) from Pongo abelii (Sumatran orangutan).